Consider the following 154-residue polypeptide: Endoribonuclease YbeY (154 aa).

Zn(2+) contacts are provided by His-113, His-117, and His-123.

It belongs to the endoribonuclease YbeY family. It depends on Zn(2+) as a cofactor.

The protein resides in the cytoplasm. Functionally, single strand-specific metallo-endoribonuclease involved in late-stage 70S ribosome quality control and in maturation of the 3' terminus of the 16S rRNA. The polypeptide is Endoribonuclease YbeY (Ehrlichia chaffeensis (strain ATCC CRL-10679 / Arkansas)).